A 278-amino-acid chain; its full sequence is tRNA(Phe) (4-demethylwyosine(37)-C(7)) aminocarboxypropyltransferase (278 aa).

S-adenosyl-L-methionine is bound by residues Ser-109, Arg-116, Glu-155, and Asp-183–Asn-184.

It belongs to the class I-like SAM-binding methyltransferase superfamily. TRM5/TYW2 family.

Its subcellular location is the cytoplasm. The enzyme catalyses 4-demethylwyosine(37) in tRNA(Phe) + S-adenosyl-L-methionine = 4-demethyl-7-[(3S)-3-amino-3-carboxypropyl]wyosine(37) in tRNA(Phe) + S-methyl-5'-thioadenosine + H(+). S-adenosyl-L-methionine-dependent transferase that acts as a component of the wyosine derivatives biosynthesis pathway. Catalyzes the transfer of the alpha-amino-alpha-carboxypropyl (acp) group from S-adenosyl-L-methionine to 4-demethylwyosine (imG-14), forming 7-aminocarboxypropyl-demethylwyosine (wybutosine-86) at position 37 of tRNA(Phe). The polypeptide is tRNA(Phe) (4-demethylwyosine(37)-C(7)) aminocarboxypropyltransferase (Pyrococcus horikoshii (strain ATCC 700860 / DSM 12428 / JCM 9974 / NBRC 100139 / OT-3)).